Consider the following 336-residue polypeptide: Ribosomal RNA large subunit methyltransferase F (336 aa).

It belongs to the methyltransferase superfamily. METTL16/RlmF family.

The protein localises to the cytoplasm. It carries out the reaction adenosine(1618) in 23S rRNA + S-adenosyl-L-methionine = N(6)-methyladenosine(1618) in 23S rRNA + S-adenosyl-L-homocysteine + H(+). Functionally, specifically methylates the adenine in position 1618 of 23S rRNA. In Yersinia pestis bv. Antiqua (strain Angola), this protein is Ribosomal RNA large subunit methyltransferase F.